The chain runs to 281 residues: Phosphonates import ATP-binding protein PhnC (281 aa).

Residues 5-253 form the ABC transporter domain; sequence IEVCGLTKSF…MLRDLYGTEA (249 aa). 38–45 provides a ligand contact to ATP; sequence GASGSGKS.

The protein belongs to the ABC transporter superfamily. Phosphonates importer (TC 3.A.1.9.1) family. In terms of assembly, the complex is composed of two ATP-binding proteins (PhnC), two transmembrane proteins (PhnE) and a solute-binding protein (PhnD).

It localises to the cell inner membrane. The enzyme catalyses phosphonate(out) + ATP + H2O = phosphonate(in) + ADP + phosphate + H(+). Part of the ABC transporter complex PhnCDE involved in phosphonates import. Responsible for energy coupling to the transport system. The polypeptide is Phosphonates import ATP-binding protein PhnC (Cupriavidus pinatubonensis (strain JMP 134 / LMG 1197) (Cupriavidus necator (strain JMP 134))).